Consider the following 376-residue polypeptide: Chaperone protein DnaJ (376 aa).

Residues D5–G70 form the J domain. A CR-type zinc finger spans residues G132–S210. Residues C145, C148, C162, C165, C184, C187, C198, and C201 each coordinate Zn(2+). CXXCXGXG motif repeat units follow at residues C145 to G152, C162 to G169, C184 to G191, and C198 to G205.

It belongs to the DnaJ family. As to quaternary structure, homodimer. Zn(2+) serves as cofactor.

The protein localises to the cytoplasm. Participates actively in the response to hyperosmotic and heat shock by preventing the aggregation of stress-denatured proteins and by disaggregating proteins, also in an autonomous, DnaK-independent fashion. Unfolded proteins bind initially to DnaJ; upon interaction with the DnaJ-bound protein, DnaK hydrolyzes its bound ATP, resulting in the formation of a stable complex. GrpE releases ADP from DnaK; ATP binding to DnaK triggers the release of the substrate protein, thus completing the reaction cycle. Several rounds of ATP-dependent interactions between DnaJ, DnaK and GrpE are required for fully efficient folding. Also involved, together with DnaK and GrpE, in the DNA replication of plasmids through activation of initiation proteins. This is Chaperone protein DnaJ from Shewanella halifaxensis (strain HAW-EB4).